We begin with the raw amino-acid sequence, 139 residues long: Putative nickel-responsive regulator (139 aa).

Residues His79, His90, His92, and Cys98 each contribute to the Ni(2+) site.

This sequence belongs to the transcriptional regulatory CopG/NikR family. Ni(2+) serves as cofactor.

In terms of biological role, transcriptional regulator. In Anaeromyxobacter sp. (strain K), this protein is Putative nickel-responsive regulator.